Consider the following 256-residue polypeptide: Thiazole synthase (256 aa).

Lysine 96 (schiff-base intermediate with DXP) is an active-site residue. Residues glycine 157, 183-184, and 205-206 contribute to the 1-deoxy-D-xylulose 5-phosphate site; these read AG and NT.

Belongs to the ThiG family. In terms of assembly, homotetramer. Forms heterodimers with either ThiH or ThiS.

It localises to the cytoplasm. The catalysed reaction is [ThiS sulfur-carrier protein]-C-terminal-Gly-aminoethanethioate + 2-iminoacetate + 1-deoxy-D-xylulose 5-phosphate = [ThiS sulfur-carrier protein]-C-terminal Gly-Gly + 2-[(2R,5Z)-2-carboxy-4-methylthiazol-5(2H)-ylidene]ethyl phosphate + 2 H2O + H(+). It functions in the pathway cofactor biosynthesis; thiamine diphosphate biosynthesis. Functionally, catalyzes the rearrangement of 1-deoxy-D-xylulose 5-phosphate (DXP) to produce the thiazole phosphate moiety of thiamine. Sulfur is provided by the thiocarboxylate moiety of the carrier protein ThiS. In vitro, sulfur can be provided by H(2)S. This Bacillus cytotoxicus (strain DSM 22905 / CIP 110041 / 391-98 / NVH 391-98) protein is Thiazole synthase.